We begin with the raw amino-acid sequence, 527 residues long: Lysine--tRNA ligase (527 aa).

Mg(2+) is bound by residues Glu431 and Glu438.

It belongs to the class-II aminoacyl-tRNA synthetase family. In terms of assembly, homodimer. Mg(2+) serves as cofactor.

The protein resides in the cytoplasm. The catalysed reaction is tRNA(Lys) + L-lysine + ATP = L-lysyl-tRNA(Lys) + AMP + diphosphate. In Chlamydia pneumoniae (Chlamydophila pneumoniae), this protein is Lysine--tRNA ligase (lysS).